A 568-amino-acid polypeptide reads, in one-letter code: Phosphoprotein (568 aa).

The interval 1 to 25 is disordered; that stretch reads MDQDAFFSERDPEAEGETPRKQESL. The segment covering 7–24 has biased composition (basic and acidic residues); it reads FSERDPEAEGETPRKQES. Positions 33–41 are N0 binding; that stretch reads DVVLSYKPT. The interval 55–322 is disordered; that stretch reads DNSKENKPSC…TTANEEGTSN (268 aa). Basic and acidic residues-rich tracts occupy residues 56 to 105, 132 to 144, 151 to 167, and 175 to 190; these read NSKE…HARI, RNTR…PNER, PTDE…KREE, and EEVR…REGR. Residues 191 to 216 show a composition bias toward polar residues; that stretch reads TNNNGRSMETSSTHSTRITDVITNPS. Positions 239 to 265 are enriched in basic and acidic residues; that stretch reads TRSERTQNSELHKSTSEDSSNLEDHNT. Residues 294-304 are compositionally biased toward low complexity; it reads YTTNNANNNTK. Positions 344–411 are multimerization; sequence FELSRSASHV…SSRDLHKRFS (68 aa). Residues 387–416 adopt a coiled-coil conformation; sequence EENRTLLKQIQEEIDSSRDLHKRFSEYQKE. The interval 412 to 445 is l protein binding; it reads EYQKEQNSLMMANLSTLHIITDRGGKTGDPSDTT. 2 disordered regions span residues 434–455 and 494–513; these read RGGK…TKGK and VLEE…LIPS. A compositionally biased stretch (polar residues) spans 441–450; that stretch reads PSDTTRSPSV. Residues 479–568 form an interaction with the nucleocapsid (N-RNA) region; sequence DLIREDELRD…FEEDIDSLTN (90 aa).

The protein belongs to the respirovirus P protein family. As to quaternary structure, homotetramer. Interacts (via multimerization domain) with polymerase L; this interaction forms the polymerase complex. Interacts (via N-terminus) with N0; this interaction allows P to chaperon N0 before encapsidation and form the N-P complex. Interacts (via C-terminus) with N-RNA template; this interaction positions the polymerase on the template.

In terms of biological role, essential cofactor of the RNA polymerase L that plays a central role in the transcription and replication by forming the polymerase complex with RNA polymerase L and recruiting L to the genomic N-RNA template for RNA synthesis. Also plays a central role in the encapsidation of nascent RNA chains by forming the encapsidation complex with the nucleocapsid protein N (N-P complex). Acts as a chaperone for newly synthesized free N protein, so-called N0, allowing encapsidation of nascent RNA chains during replication. The nucleoprotein protein N prevents excessive phosphorylation of P, which leads to down-regulation of viral transcription/ replication. Participates, together with N, in the formation of viral factories (viroplasms), which are large inclusions in the host cytoplasm where replication takes place. Recruits host PI4KB and remodel the host endoplasmic reticulum membrane to form viral replication factories. This Human parainfluenza 1 virus (strain CI-5/73) (HPIV-1) protein is Phosphoprotein (P/C).